Reading from the N-terminus, the 242-residue chain is Adenosine 5'-phosphosulfate reductase (242 aa).

[4Fe-4S] cluster contacts are provided by Cys125, Cys126, Cys208, and Cys211. The active-site Nucleophile; cysteine thiosulfonate intermediate is the Cys234.

It belongs to the PAPS reductase family. CysH subfamily. Requires [4Fe-4S] cluster as cofactor.

It localises to the cytoplasm. The enzyme catalyses [thioredoxin]-disulfide + sulfite + AMP + 2 H(+) = adenosine 5'-phosphosulfate + [thioredoxin]-dithiol. It participates in sulfur metabolism; hydrogen sulfide biosynthesis; sulfite from sulfate. Catalyzes the formation of sulfite from adenosine 5'-phosphosulfate (APS) using thioredoxin as an electron donor. This is Adenosine 5'-phosphosulfate reductase from Staphylococcus saprophyticus subsp. saprophyticus (strain ATCC 15305 / DSM 20229 / NCIMB 8711 / NCTC 7292 / S-41).